The primary structure comprises 293 residues: MPWIQLRINTNSDDAETISDLLMEEGSVSITFEDGKDTPIFEPKLGETPLWRDTVVVALFDAETDLTPTIAMLKTLPFLGENFSHKVEQIEDKDWVREWMDNFHPIQFGTRLWICPSWREIPDPTAVNVILDPGLAFGTGTHPTTALCLEWLDSLDLSDEEVIDFGCGSGILAVAALKLGAKNVTGIDIDYQAIDASRANAERNDVADKLALYLPEDQPADLKADVLVANILAGPLRELAPLIAERVKTSGKLALSGLLKEQAQEISDFYSQWFDMDAAAHKEDWSRLTGKRK.

Residues Thr-145, Gly-166, Asp-188, and Asn-230 each coordinate S-adenosyl-L-methionine.

Belongs to the methyltransferase superfamily. PrmA family.

The protein resides in the cytoplasm. It carries out the reaction L-lysyl-[protein] + 3 S-adenosyl-L-methionine = N(6),N(6),N(6)-trimethyl-L-lysyl-[protein] + 3 S-adenosyl-L-homocysteine + 3 H(+). Methylates ribosomal protein L11. The chain is Ribosomal protein L11 methyltransferase from Shewanella baltica (strain OS195).